A 400-amino-acid polypeptide reads, in one-letter code: Telomeric repeat-binding factor 2-interacting protein 1 (400 aa).

Ala-2 is subject to N-acetylalanine. Phosphoserine is present on residues Ser-36 and Ser-43. One can recognise a BRCT domain in the interval 78–101; sequence FISTQYILDCVERNERLELEAYRL. A disordered region spans residues 105–126; that stretch reads SAADTGSEAKPGALAEGAAEPE. Low complexity predominate over residues 112-125; it reads EAKPGALAEGAAEP. Lys-114 is covalently cross-linked (Glycyl lysine isopeptide (Lys-Gly) (interchain with G-Cter in SUMO2)). In terms of domain architecture, Myb-like spans 128 to 188; the sequence is QRLAGRIAFT…SLKDRYLKHL (61 aa). Residues Ser-154 and Ser-156 each carry the phosphoserine modification. Lys-194 participates in a covalent cross-link: Glycyl lysine isopeptide (Lys-Gly) (interchain with G-Cter in SUMO2). Disordered stretches follow at residues 196 to 244 and 264 to 311; these read LLGD…EEIQ and VVVD…SQPE. Phosphoserine is present on residues Ser-203 and Ser-206. Residues Lys-208, Lys-212, and Lys-240 each participate in a glycyl lysine isopeptide (Lys-Gly) (interchain with G-Cter in SUMO2) cross-link. The span at 280–305 shows a compositional bias: acidic residues; it reads CDDDPPTPEEDSETQPDEEEEEEEEE. Lys-373 is covalently cross-linked (Glycyl lysine isopeptide (Lys-Gly) (interchain with G-Cter in SUMO2)). A Nuclear localization signal motif is present at residues 384-400; it reads KKFGAQNVARRIEFRKK.

It belongs to the RAP1 family. As to quaternary structure, associates with the I-kappa-B-kinase (IKK) core complex, composed of CHUK, IKBKB and IKBKG. Homodimer. Component of the shelterin complex (telosome) composed of TERF1, TERF2, TINF2, TERF2IP ACD and POT1. Interacts with TERF2 (but not TERF1) with its C-terminus. Interacts with SLX4/BTBD12. Interacts with TERF2; the interaction is direct.

The protein resides in the nucleus. The protein localises to the cytoplasm. It localises to the chromosome. Its subcellular location is the telomere. In terms of biological role, acts both as a regulator of telomere function and as a transcription regulator. Involved in the regulation of telomere length and protection as a component of the shelterin complex (telosome). In contrast to other components of the shelterin complex, it is dispensible for telomere capping and does not participate in the protection of telomeres against non-homologous end-joining (NHEJ)-mediated repair. Instead, it is required to negatively regulate telomere recombination and is essential for repressing homology-directed repair (HDR), which can affect telomere length. Does not bind DNA directly: recruited to telomeric double-stranded 5'-TTAGGG-3' repeats via its interaction with TERF2. Independently of its function in telomeres, also acts as a transcription regulator: recruited to extratelomeric 5'-TTAGGG-3' sites via its association with TERF2 or other factors, and regulates gene expression. When cytoplasmic, associates with the I-kappa-B-kinase (IKK) complex and acts as a regulator of the NF-kappa-B signaling by promoting IKK-mediated phosphorylation of RELA/p65, leading to activate expression of NF-kappa-B target genes. The protein is Telomeric repeat-binding factor 2-interacting protein 1 (TERF2IP) of Macaca fascicularis (Crab-eating macaque).